The chain runs to 179 residues: Sec-independent protein translocase protein TatB (179 aa).

The helical transmembrane segment at 1–21 threads the bilayer; it reads MFDLGFWEVLIIMLIGLLILG. Basic and acidic residues-rich tracts occupy residues 75–86 and 94–106; these read KDVEKNARRFEA and TFRD…DDAA. The segment at 75-179 is disordered; it reads KDVEKNARRF…QGGGGEEKRQ (105 aa).

This sequence belongs to the TatB family. The Tat system comprises two distinct complexes: a TatABC complex, containing multiple copies of TatA, TatB and TatC subunits, and a separate TatA complex, containing only TatA subunits. Substrates initially bind to the TatABC complex, which probably triggers association of the separate TatA complex to form the active translocon.

Its subcellular location is the cell inner membrane. Part of the twin-arginine translocation (Tat) system that transports large folded proteins containing a characteristic twin-arginine motif in their signal peptide across membranes. Together with TatC, TatB is part of a receptor directly interacting with Tat signal peptides. TatB may form an oligomeric binding site that transiently accommodates folded Tat precursor proteins before their translocation. In Alkalilimnicola ehrlichii (strain ATCC BAA-1101 / DSM 17681 / MLHE-1), this protein is Sec-independent protein translocase protein TatB.